A 151-amino-acid polypeptide reads, in one-letter code: MGSDDLSAGDKIQKGFQINNMILRDADSGKIIWQENKDFSAPDVEHEARVPIKILDMRAVSREINFSTIESMENFRLDQKVLFKGRIMEEWFFEMGFVGANTTNTWQSTIEAAPESQMMPAKVLNGNVTIQTSFYDNETLITKSVVRLYYI.

It belongs to the PDE6D/unc-119 family. As to quaternary structure, interacts with Pde6.

The protein localises to the nucleus. It localises to the cytoplasm. This Drosophila willistoni (Fruit fly) protein is Probable cGMP 3',5'-cyclic phosphodiesterase subunit delta.